The sequence spans 381 residues: Queuine tRNA-ribosyltransferase (381 aa).

Asp92 functions as the Proton acceptor in the catalytic mechanism. Substrate is bound by residues 92-96 (DSGGF), Asp146, Gln190, and Gly217. An RNA binding region spans residues 248-254 (GVGRPED). The active-site Nucleophile is the Asp267. The RNA binding; important for wobble base 34 recognition stretch occupies residues 272–276 (TRNAR). Positions 305, 307, 310, and 337 each coordinate Zn(2+).

It belongs to the queuine tRNA-ribosyltransferase family. Homodimer. Within each dimer, one monomer is responsible for RNA recognition and catalysis, while the other monomer binds to the replacement base PreQ1. Requires Zn(2+) as cofactor.

It carries out the reaction 7-aminomethyl-7-carbaguanine + guanosine(34) in tRNA = 7-aminomethyl-7-carbaguanosine(34) in tRNA + guanine. It participates in tRNA modification; tRNA-queuosine biosynthesis. Catalyzes the base-exchange of a guanine (G) residue with the queuine precursor 7-aminomethyl-7-deazaguanine (PreQ1) at position 34 (anticodon wobble position) in tRNAs with GU(N) anticodons (tRNA-Asp, -Asn, -His and -Tyr). Catalysis occurs through a double-displacement mechanism. The nucleophile active site attacks the C1' of nucleotide 34 to detach the guanine base from the RNA, forming a covalent enzyme-RNA intermediate. The proton acceptor active site deprotonates the incoming PreQ1, allowing a nucleophilic attack on the C1' of the ribose to form the product. After dissociation, two additional enzymatic reactions on the tRNA convert PreQ1 to queuine (Q), resulting in the hypermodified nucleoside queuosine (7-(((4,5-cis-dihydroxy-2-cyclopenten-1-yl)amino)methyl)-7-deazaguanosine). In Xanthomonas campestris pv. campestris (strain 8004), this protein is Queuine tRNA-ribosyltransferase.